Consider the following 717-residue polypeptide: Patatin-like phospholipase domain-containing protein AO090003000839 (717 aa).

A helical transmembrane segment spans residues 87–107 (WPFLFIVFGWITVLGFAYALT). Residues 277–468 (LCLSGGATFA…RTDIPIRALN (192 aa)) enclose the PNPLA domain. Residues 308–312 (GTSGG) carry the GXSXG motif. Ser-310 acts as the Nucleophile in catalysis. The active-site Proton acceptor is the Asp-455. The disordered stretch occupies residues 620 to 696 (VSPAQSRRKR…STGNIFQEMR (77 aa)). A compositionally biased stretch (basic and acidic residues) spans 639-658 (MVERLDHNLPDRQPDNKEDL). The span at 660–673 (DSSGIDSNVSSRDS) shows a compositional bias: low complexity.

It belongs to the PLPL family.

Its subcellular location is the membrane. Functionally, probable lipid hydrolase. This chain is Patatin-like phospholipase domain-containing protein AO090003000839, found in Aspergillus oryzae (strain ATCC 42149 / RIB 40) (Yellow koji mold).